Reading from the N-terminus, the 406-residue chain is Exodeoxyribonuclease 7 large subunit (406 aa).

Belongs to the XseA family. As to quaternary structure, heterooligomer composed of large and small subunits.

The protein resides in the cytoplasm. It catalyses the reaction Exonucleolytic cleavage in either 5'- to 3'- or 3'- to 5'-direction to yield nucleoside 5'-phosphates.. Bidirectionally degrades single-stranded DNA into large acid-insoluble oligonucleotides, which are then degraded further into small acid-soluble oligonucleotides. This chain is Exodeoxyribonuclease 7 large subunit, found in Desulforudis audaxviator (strain MP104C).